The chain runs to 193 residues: Xanthine phosphoribosyltransferase (193 aa).

2 residues coordinate xanthine: Leu-20 and Thr-27. Residue 128-132 (ANGQA) participates in 5-phospho-alpha-D-ribose 1-diphosphate binding. Lys-156 serves as a coordination point for xanthine.

This sequence belongs to the purine/pyrimidine phosphoribosyltransferase family. Xpt subfamily. Homodimer.

It is found in the cytoplasm. It catalyses the reaction XMP + diphosphate = xanthine + 5-phospho-alpha-D-ribose 1-diphosphate. It participates in purine metabolism; XMP biosynthesis via salvage pathway; XMP from xanthine: step 1/1. Converts the preformed base xanthine, a product of nucleic acid breakdown, to xanthosine 5'-monophosphate (XMP), so it can be reused for RNA or DNA synthesis. This chain is Xanthine phosphoribosyltransferase, found in Streptococcus uberis (strain ATCC BAA-854 / 0140J).